The sequence spans 360 residues: Galactoside alpha-(1,2)-fucosyltransferase 1 (360 aa).

The Cytoplasmic portion of the chain corresponds to M1–H8. The helical; Signal-anchor for type II membrane protein transmembrane segment at L9–I27 threads the bilayer. Residues H28–Q360 lie on the Lumenal side of the membrane. N-linked (GlcNAc...) asparagine glycans are attached at residues N65, N301, and N327.

The protein belongs to the glycosyltransferase 11 family. Expressed in brain, intestine and kidney.

The protein resides in the golgi apparatus. The protein localises to the golgi stack membrane. It catalyses the reaction a ganglioside GM1 + GDP-beta-L-fucose = a ganglioside Fuc-GM1 + GDP + H(+). The enzyme catalyses a beta-D-galactosyl-(1-&gt;4)-N-acetyl-beta-D-glucosaminyl derivative + GDP-beta-L-fucose = an alpha-L-Fuc-(1-&gt;2)-beta-D-Gal-(1-&gt;4)-beta-D-GlcNAc derivative + GDP + H(+). The catalysed reaction is a ganglioside GA1 + GDP-beta-L-fucose = a ganglioside Fuc-GA1 + GDP + H(+). It carries out the reaction a beta-D-Gal-(1-&gt;3)-beta-D-GlcNAc-(1-&gt;3)-beta-D-Gal-(1-&gt;4)-beta-D-Glc-(1&lt;-&gt;1')-Cer(d18:1(4E)) + GDP-beta-L-fucose = alpha-L-fucosyl-(1-&gt;2)- beta-D-galactosyl-(1-&gt;3)-N-acetyl-beta-D-glucosaminyl-(1-&gt;3)-beta-D-galactosyl-(1-&gt;4)-beta-D-glucosyl-(1&lt;-&gt;1')-N-acylsphing-4-enine + GDP + H(+). It catalyses the reaction a neolactoside nLc4Cer(d18:1(4E)) + GDP-beta-L-fucose = a neolactoside IV(2)-alpha-Fuc-nLc4Cer(d18:1(4E)) + GDP + H(+). The enzyme catalyses beta-D-galactosyl-(1-&gt;3)-N-acetyl-D-galactosamine + GDP-beta-L-fucose = alpha-L-fucosyl-(1-&gt;2)-beta-D-galactosyl-(1-&gt;3)-N-acetyl-D-galactosamine + GDP + H(+). It participates in protein modification; protein glycosylation. Functionally, catalyzes the transfer of L-fucose, from a guanosine diphosphate-beta-L-fucose, to the terminal galactose residue of glycoconjugates through an alpha(1,2) linkage leading to H antigen synthesis that is an intermediate substrate in the synthesis of ABO blood group antigens. H antigen is essential for maturation of the glomerular layer of the main olfactory bulb, in cell migration and early cell-cell contacts during tumor associated angiogenesis. Preferentially fucosylates soluble lactose and to a lesser extent, fucosylates glycolipids gangliosides GA1 and GM1a. The protein is Galactoside alpha-(1,2)-fucosyltransferase 1 of Bos taurus (Bovine).